A 599-amino-acid chain; its full sequence is Serine/threonine-protein kinase haspin homolog (599 aa).

Residues 287-599 form the Protein kinase domain; the sequence is PESIVKIGEG…FSDMLMDQIS (313 aa). Residues 293–301, Lys-310, 407–412, 448–453, and 486–488 each bind ATP; these read IGEGTYGEA, EHGGKD, DLHWGN, and DFT. Asp-448 functions as the Proton acceptor in the catalytic mechanism.

Belongs to the protein kinase superfamily. Ser/Thr protein kinase family. Haspin subfamily. As to expression, expressed in meristems and primordia of root tips, lateral roots, shoot apex, leaves and flowers.

It is found in the cytoplasm. Its subcellular location is the perinuclear region. The protein localises to the nucleus. It localises to the chromosome. The protein resides in the cytoskeleton. It is found in the phragmoplast. It catalyses the reaction L-seryl-[protein] + ATP = O-phospho-L-seryl-[protein] + ADP + H(+). The enzyme catalyses L-threonyl-[protein] + ATP = O-phospho-L-threonyl-[protein] + ADP + H(+). Its function is as follows. Threonine-protein kinase that phosphorylates histone H3 in vitro at 'Thr-3' (H3T3ph) and 'Thr-11' (H3T11ph), but not at 'Ser-10' (H3S10ph) or 'Ser-28' (H3S28ph). Plays a role in mitotic cell division during plant growth. Threonine-protein kinase that phosphorylates histone H3 in vitro at 'Thr-3' (H3T3ph), but not at 'Thr-11' (H3T11ph), 'Ser-10' (H3S10ph) or 'Ser-28' (H3S28ph). Involved in histone H3 phosphorylation in mitotic cells. Contributes to organ and plant development, as well as embryonic patterning. In Arabidopsis thaliana (Mouse-ear cress), this protein is Serine/threonine-protein kinase haspin homolog.